Here is a 96-residue protein sequence, read N- to C-terminus: Elicitor peptide 3 (96 aa).

A propeptide spanning residues 1–73 (MENLRNGEDN…EEEEEDGMTI (73 aa)) is cleaved from the precursor. The segment at 32-96 (SGLESSSSSS…PSSGKGGKHN (65 aa)) is disordered. A compositionally biased stretch (low complexity) spans 35–49 (ESSSSSSSSCDLSSS). The span at 52-71 (EEDESIDIKEEEEEEEEDGM) shows a compositional bias: acidic residues.

It belongs to the brassicaceae elicitor peptide family.

In terms of biological role, elicitor of plant defense. In Arabidopsis thaliana (Mouse-ear cress), this protein is Elicitor peptide 3 (PEP3).